The sequence spans 736 residues: MNSCNNIAITPELIAQHGLKSDEYQHILTLIGREPTFTELGIFSAMWNEHCSYKSSKKWLKTLPIKGKCVIQGPGENAGVIDIGKGQCVVFKMESHNHPSYIEPYQGAATGMGGILRDVFTMGARPVAAMNALRFGSPNHPRTRHLVAGVVSGIGGYSNAFGVPTVGGEVNFDERYNGNILVNAFVAGIAKTDSIFYSKAQGVGLPVVYLGAKTGRDGVGGAMMASAEFNDSIDEKRPTVQVGDPFIEKCLLEACLELMELKAIVAIQDMGAAGLTSSAVEMGAKGNLGIQLNLDKVPTREENMTAYEIMLSESQERMLMVLKPELKKRAAAIFQKWGLHFSIIGKTTDDLRFRVTHQGEEVVNLPIKELGDEAPVYDRPWIEPTLKPTLKAEEVKKIENFADVLLKLLNSANQSSRRWVYEQYDTLIQGNTLVRPGGDAGVIRVSNNDKRALAFSCDVTPRYCEADPYEGGKQAVVECWRNISTTGATPLAATDNLNFGNPENPKIMGQLVFAIKGISEACRVLDFPIVSGNVSLYNETNGEAILPTPTIAGVGLLDNWSKTVTIGGMQNKDSIVLIGPCGSHLGQSIYARNILNIDAGAPPHIDLQLEKKHGQFVRDVIHRGFVNAAHDISDGGLALALAEMVIKASKGIRIKLSNKSPQHAELFGEDQARYILAVKPHALNSLKELAQVNEISLTELGTVEGNSLNIDSILNLSIDKLTQNYESWFPQFMNEE.

The active site involves His-50. ATP contacts are provided by Tyr-53 and Lys-92. Glu-94 provides a ligand contact to Mg(2+). Substrate-binding positions include 95–98 (SHNH) and Arg-117. His-96 (proton acceptor) is an active-site residue. A Mg(2+)-binding site is contributed by Asp-118. Gln-241 provides a ligand contact to substrate. Asp-269 is a binding site for Mg(2+). Substrate is bound at residue 313–315 (ESQ). The ATP site is built by Asp-495 and Gly-532. A Mg(2+)-binding site is contributed by Asn-533. Ser-535 contributes to the substrate binding site.

This sequence belongs to the FGAMS family. As to quaternary structure, monomer. Part of the FGAM synthase complex composed of 1 PurL, 1 PurQ and 2 PurS subunits.

It is found in the cytoplasm. It catalyses the reaction N(2)-formyl-N(1)-(5-phospho-beta-D-ribosyl)glycinamide + L-glutamine + ATP + H2O = 2-formamido-N(1)-(5-O-phospho-beta-D-ribosyl)acetamidine + L-glutamate + ADP + phosphate + H(+). The protein operates within purine metabolism; IMP biosynthesis via de novo pathway; 5-amino-1-(5-phospho-D-ribosyl)imidazole from N(2)-formyl-N(1)-(5-phospho-D-ribosyl)glycinamide: step 1/2. In terms of biological role, part of the phosphoribosylformylglycinamidine synthase complex involved in the purines biosynthetic pathway. Catalyzes the ATP-dependent conversion of formylglycinamide ribonucleotide (FGAR) and glutamine to yield formylglycinamidine ribonucleotide (FGAM) and glutamate. The FGAM synthase complex is composed of three subunits. PurQ produces an ammonia molecule by converting glutamine to glutamate. PurL transfers the ammonia molecule to FGAR to form FGAM in an ATP-dependent manner. PurS interacts with PurQ and PurL and is thought to assist in the transfer of the ammonia molecule from PurQ to PurL. This Bartonella quintana (strain Toulouse) (Rochalimaea quintana) protein is Phosphoribosylformylglycinamidine synthase subunit PurL.